The chain runs to 1386 residues: DNA-directed RNA polymerase subunit beta' (1386 aa).

Zn(2+)-binding residues include cysteine 75, cysteine 77, cysteine 90, and cysteine 93. Mg(2+)-binding residues include aspartate 466, aspartate 468, and aspartate 470. Zn(2+) is bound by residues cysteine 809, cysteine 883, cysteine 890, and cysteine 893.

This sequence belongs to the RNA polymerase beta' chain family. As to quaternary structure, the RNAP catalytic core consists of 2 alpha, 1 beta, 1 beta' and 1 omega subunit. When a sigma factor is associated with the core the holoenzyme is formed, which can initiate transcription. Mg(2+) serves as cofactor. Zn(2+) is required as a cofactor.

The catalysed reaction is RNA(n) + a ribonucleoside 5'-triphosphate = RNA(n+1) + diphosphate. Functionally, DNA-dependent RNA polymerase catalyzes the transcription of DNA into RNA using the four ribonucleoside triphosphates as substrates. This Oleidesulfovibrio alaskensis (strain ATCC BAA-1058 / DSM 17464 / G20) (Desulfovibrio alaskensis) protein is DNA-directed RNA polymerase subunit beta'.